Consider the following 912-residue polypeptide: DNA (cytosine-5)-methyltransferase 3A (912 aa).

2 disordered regions span residues 1–178 and 221–286; these read MPAM…GWES and IAGM…EYED. The segment covering 17–40 has biased composition (basic and acidic residues); that stretch reads AEREEDRKDGEEQEEPRGKEERQE. The span at 47-57 shows a compositional bias: basic residues; the sequence is KVGRPGRKRKH. A compositionally biased stretch (polar residues) spans 74 to 83; it reads KSPSMAQDSG. At Ser105 the chain carries Phosphoserine. The span at 113 to 128 shows a compositional bias: low complexity; it reads GAPAEGEGAAETLPEA. Thr124 carries the phosphothreonine modification. Residues 149 to 167 show a composition bias toward basic and acidic residues; that stretch reads AGKEQKETNIESMKMEGSR. Residue Lys162 forms a Glycyl lysine isopeptide (Lys-Gly) (interchain with G-Cter in SUMO2) linkage. Omega-N-methylarginine is present on Arg171. The interaction with DNMT1 and DNMT3B stretch occupies residues 199 to 403; that stretch reads SKRKRDEWLA…DTAKAVEVQN (205 aa). 2 positions are modified to phosphoserine: Ser243 and Ser255. Positions 246–260 are enriched in polar residues; sequence AVQQPTDPASPTVAT. Thr261 is modified (phosphothreonine). Ser267 carries the post-translational modification Phosphoserine. Positions 269 to 279 are enriched in basic and acidic residues; the sequence is AGDKNATKAGD. One can recognise a PWWP domain in the interval 292-350; sequence IGELVWGKLRGFSWWPGRIVSWWMTGRSRAAEGTRWVMWFGDGKFSVVCVEKLMPLSSF. Ser390 and Ser393 each carry phosphoserine. Residues 447 to 466 form a disordered region; sequence AYAPPPPAKKPRKSTAEKPK. Positions 482–614 constitute an ADD domain; the sequence is EVRQKCRNIE…LQMFFANNHD (133 aa). The GATA-type; atypical zinc finger occupies 493-523; that stretch reads ICISCGSLNVTLEHPLFVGGMCQNCKNCFLE. The interval 494 to 586 is interaction with the PRC2/EED-EZH2 complex; that stretch reads CISCGSLNVT…KEDPWNCYMC (93 aa). Residues 534–590 form a PHD-type; atypical zinc finger; sequence QSYCTICCGGREVLMCGNNNCCRCFCVECVDLLVGPGAAQAAIKEDPWNCYMCGHKG. Positions 634-912 constitute an SAM-dependent MTase C5-type domain; sequence IRVLSLFDGI…APLKEYFACV (279 aa). S-adenosyl-L-methionine-binding positions include 641–645, Glu664, and 686–688; these read DGIAT and DVR. The active site involves Cys710. Position 710 is an S-methylcysteine; by autocatalysis (Cys710). Position 891–893 (891–893) interacts with S-adenosyl-L-methionine; the sequence is RSW.

Belongs to the class I-like SAM-binding methyltransferase superfamily. C5-methyltransferase family. In terms of assembly, heterotetramer composed of 1 DNMT3A homodimer and 2 DNMT3L subunits (DNMT3L-DNMT3A-DNMT3A-DNMT3L). Interacts with UBC9, PIAS1 and PIAS2. Binds the ZBTB18 transcriptional repressor. Interacts with SETDB1. Associates with HDAC1 through its ADD domain. Interacts with UHRF1. Interacts with DNMT1 and DNMT3B. Interacts with the PRC2/EED-EZH2 complex. Interacts with MPHOSPH8. Interacts with histone H3 that is not methylated at 'Lys-4' (H3K4). Interacts with SPOCD1. Interacts with ZNF263; recruited to the SIX3 promoter along with other proteins involved in chromatin modification and transcriptional corepression where it contributes to transcriptional repression. Post-translationally, sumoylated; sumoylation disrupts the ability to interact with histone deacetylases (HDAC1 and HDAC2) and repress transcription. Auto-methylated at Cys-710: auto-methylation takes place in absence of DNA substrate and inactivates the DNA methyltransferase activity. Inactivation by auto-methylation may be used to inactivate unused DNA methyltransferases in the cell. Highly expressed in fetal tissues, skeletal muscle, heart, peripheral blood mononuclear cells, kidney, and at lower levels in placenta, brain, liver, colon, spleen, small intestine and lung.

The protein localises to the nucleus. Its subcellular location is the chromosome. It is found in the cytoplasm. The enzyme catalyses a 2'-deoxycytidine in DNA + S-adenosyl-L-methionine = a 5-methyl-2'-deoxycytidine in DNA + S-adenosyl-L-homocysteine + H(+). It carries out the reaction L-cysteinyl-[protein] + S-adenosyl-L-methionine = S-methyl-L-cysteinyl-[protein] + S-adenosyl-L-homocysteine + H(+). Its activity is regulated as follows. Activated by binding to the regulatory factor DNMT3L. Auto-methylation at Cys-710 in absence of DNA inactivates the DNA methyltransferase activity. In terms of biological role, required for genome-wide de novo methylation and is essential for the establishment of DNA methylation patterns during development. DNA methylation is coordinated with methylation of histones. It modifies DNA in a non-processive manner and also methylates non-CpG sites. May preferentially methylate DNA linker between 2 nucleosomal cores and is inhibited by histone H1. Plays a role in paternal and maternal imprinting. Required for methylation of most imprinted loci in germ cells. Acts as a transcriptional corepressor for ZBTB18. Recruited to trimethylated 'Lys-36' of histone H3 (H3K36me3) sites. Can actively repress transcription through the recruitment of HDAC activity. Also has weak auto-methylation activity on Cys-710 in absence of DNA. This is DNA (cytosine-5)-methyltransferase 3A (DNMT3A) from Homo sapiens (Human).